The primary structure comprises 125 residues: Small ribosomal subunit protein uS13 (125 aa).

A disordered region spans residues 92 to 125 (RRHLPVHGQRTKTNARTRKGPKKTVAGKKKAGKK).

The protein belongs to the universal ribosomal protein uS13 family. In terms of assembly, part of the 30S ribosomal subunit. Forms a loose heterodimer with protein S19. Forms two bridges to the 50S subunit in the 70S ribosome.

Its function is as follows. Located at the top of the head of the 30S subunit, it contacts several helices of the 16S rRNA. In the 70S ribosome it contacts the 23S rRNA (bridge B1a) and protein L5 of the 50S subunit (bridge B1b), connecting the 2 subunits; these bridges are implicated in subunit movement. Contacts the tRNAs in the A and P-sites. The protein is Small ribosomal subunit protein uS13 of Saccharopolyspora erythraea (strain ATCC 11635 / DSM 40517 / JCM 4748 / NBRC 13426 / NCIMB 8594 / NRRL 2338).